Reading from the N-terminus, the 91-residue chain is Bacterial microcompartment shell vertex protein PduN (91 aa).

The BMV domain maps to methionine 1–aspartate 87.

This sequence belongs to the CcmL/EutN family. In terms of assembly, homopentamer. Interacts with shell protein PduA.

It localises to the bacterial microcompartment. It functions in the pathway polyol metabolism; 1,2-propanediol degradation. Its function is as follows. Probably forms vertices in the shell of the bacterial microcompartment (BMC) dedicated to 1,2-propanediol (1,2-PD) degradation. Required for structural integrity of BMCs and to mitigate propionaldehyde toxicity. The 1,2-PD-specific bacterial microcompartment (BMC) concentrates low levels of 1,2-PD catabolic enzymes, concentrates volatile reaction intermediates thus enhancing pathway flux and keeps the level of toxic, mutagenic propionaldehyde low. This chain is Bacterial microcompartment shell vertex protein PduN, found in Salmonella typhimurium (strain LT2 / SGSC1412 / ATCC 700720).